The primary structure comprises 103 residues: PTS system lactose-specific EIIA component (103 aa).

Residues 1–102 (MNREEVQLLG…MKHLLEFYKR (102 aa)) enclose the PTS EIIA type-3 domain. H78 serves as the catalytic Tele-phosphohistidine intermediate. At H78 the chain carries Phosphohistidine; by HPr. Position 81 (D81) interacts with Mg(2+).

In terms of assembly, homotrimer. Requires Mg(2+) as cofactor.

The protein localises to the cytoplasm. The phosphoenolpyruvate-dependent sugar phosphotransferase system (sugar PTS), a major carbohydrate active transport system, catalyzes the phosphorylation of incoming sugar substrates concomitantly with their translocation across the cell membrane. The enzyme II LacEF PTS system is involved in lactose transport. This Staphylococcus aureus (strain COL) protein is PTS system lactose-specific EIIA component.